Here is a 426-residue protein sequence, read N- to C-terminus: MTQMTDAKNNIITKEMEFVAKEENIAVEKIRKWVAKGFVVIPKNIHRNTKPVGIGDNLKTKVNVNLGTSTDCIDIDMEIRKAIISEEYGADAIMDLSTGGELPEIRKQILKNTTLPVGTVPMYEIGIESKNKYGRVIDFDEDIIFNTIERQAKEGVDFMTLHCGITKHTIDTLNNDDRIMGVVSRGGAYITAYIMHHQKENPLYSQFDYLLEMLKEHDVTLSLGDGMRPGCLCDHTDRPQIQELIVLGELVDRCREAGVQVMVEGPGHVPLNNVETNMKIQKTLCKNAPFYVLGPLPTDLAMGYDHITSAIGGALAAYSGANFLCYVTPAEHVRLMNEDDVREGLIASKIAAQVADVAKGNKQAWAKEKEMAIARKNHDWEKQFELSIDSDKPKKMREELPPKEEDACSVCGEYCALLMVEEAGKR.

Substrate is bound by residues Asn-65, Met-94, Tyr-123, His-162, 184–186 (SRG), 225–228 (DGMR), and Glu-264. His-268 lines the Zn(2+) pocket. Residue Tyr-291 coordinates substrate. His-332 contacts Zn(2+). [4Fe-4S] cluster is bound by residues Cys-408, Cys-411, and Cys-415.

The protein belongs to the ThiC family. It depends on [4Fe-4S] cluster as a cofactor.

The enzyme catalyses 5-amino-1-(5-phospho-beta-D-ribosyl)imidazole + S-adenosyl-L-methionine = 4-amino-2-methyl-5-(phosphooxymethyl)pyrimidine + CO + 5'-deoxyadenosine + formate + L-methionine + 3 H(+). The protein operates within cofactor biosynthesis; thiamine diphosphate biosynthesis. Its function is as follows. Catalyzes the synthesis of the hydroxymethylpyrimidine phosphate (HMP-P) moiety of thiamine from aminoimidazole ribotide (AIR) in a radical S-adenosyl-L-methionine (SAM)-dependent reaction. The sequence is that of Phosphomethylpyrimidine synthase from Methanococcus aeolicus (strain ATCC BAA-1280 / DSM 17508 / OCM 812 / Nankai-3).